We begin with the raw amino-acid sequence, 530 residues long: Glucose-6-phosphate isomerase (530 aa).

The Proton donor role is filled by glutamate 322. Residues histidine 351 and lysine 455 contribute to the active site.

The protein belongs to the GPI family.

It is found in the cytoplasm. It carries out the reaction alpha-D-glucose 6-phosphate = beta-D-fructose 6-phosphate. The protein operates within carbohydrate biosynthesis; gluconeogenesis. It functions in the pathway carbohydrate degradation; glycolysis; D-glyceraldehyde 3-phosphate and glycerone phosphate from D-glucose: step 2/4. In terms of biological role, catalyzes the reversible isomerization of glucose-6-phosphate to fructose-6-phosphate. In Citrifermentans bemidjiense (strain ATCC BAA-1014 / DSM 16622 / JCM 12645 / Bem) (Geobacter bemidjiensis), this protein is Glucose-6-phosphate isomerase.